We begin with the raw amino-acid sequence, 371 residues long: 4-hydroxy-3-methylbut-2-en-1-yl diphosphate synthase (flavodoxin) (371 aa).

[4Fe-4S] cluster-binding residues include Cys-270, Cys-273, Cys-305, and Glu-312.

Belongs to the IspG family. [4Fe-4S] cluster is required as a cofactor.

It catalyses the reaction (2E)-4-hydroxy-3-methylbut-2-enyl diphosphate + oxidized [flavodoxin] + H2O + 2 H(+) = 2-C-methyl-D-erythritol 2,4-cyclic diphosphate + reduced [flavodoxin]. The protein operates within isoprenoid biosynthesis; isopentenyl diphosphate biosynthesis via DXP pathway; isopentenyl diphosphate from 1-deoxy-D-xylulose 5-phosphate: step 5/6. In terms of biological role, converts 2C-methyl-D-erythritol 2,4-cyclodiphosphate (ME-2,4cPP) into 1-hydroxy-2-methyl-2-(E)-butenyl 4-diphosphate. This chain is 4-hydroxy-3-methylbut-2-en-1-yl diphosphate synthase (flavodoxin), found in Shewanella denitrificans (strain OS217 / ATCC BAA-1090 / DSM 15013).